The sequence spans 382 residues: Homoserine O-succinyltransferase (382 aa).

The AB hydrolase-1 domain occupies 51 to 359; that stretch reads NAILVCHALS…EATQGHDAFL (309 aa). Catalysis depends on Ser-157, which acts as the Nucleophile. Arg-227 is a binding site for substrate. Residues Asp-322 and His-355 contribute to the active site. Asp-356 is a binding site for substrate.

This sequence belongs to the AB hydrolase superfamily. MetX family. As to quaternary structure, homodimer.

Its subcellular location is the cytoplasm. It carries out the reaction L-homoserine + succinyl-CoA = O-succinyl-L-homoserine + CoA. Its pathway is amino-acid biosynthesis; L-methionine biosynthesis via de novo pathway; O-succinyl-L-homoserine from L-homoserine: step 1/1. Transfers a succinyl group from succinyl-CoA to L-homoserine, forming succinyl-L-homoserine. The polypeptide is Homoserine O-succinyltransferase (Halorhodospira halophila (strain DSM 244 / SL1) (Ectothiorhodospira halophila (strain DSM 244 / SL1))).